Reading from the N-terminus, the 386-residue chain is Probable serine/threonine-protein kinase PBL23 (386 aa).

A lipid anchor (S-palmitoyl cysteine) is attached at Cys5. Residues 82–360 enclose the Protein kinase domain; the sequence is FNPDNQLGEG…SDVVTALEYL (279 aa). ATP contacts are provided by residues 88–96 and Lys111; that span reads LGEGGFGRV. The active-site Proton acceptor is the Asp210. The disordered stretch occupies residues 365 to 386; the sequence is TEEDGQTVEGEEEEEEDERSKL. Residues 368 to 386 are compositionally biased toward acidic residues; it reads DGQTVEGEEEEEEDERSKL.

Belongs to the protein kinase superfamily. Ser/Thr protein kinase family.

It is found in the cell membrane. It carries out the reaction L-seryl-[protein] + ATP = O-phospho-L-seryl-[protein] + ADP + H(+). The catalysed reaction is L-threonyl-[protein] + ATP = O-phospho-L-threonyl-[protein] + ADP + H(+). May be involved in plant defense signaling. The chain is Probable serine/threonine-protein kinase PBL23 from Arabidopsis thaliana (Mouse-ear cress).